The following is a 946-amino-acid chain: Inhibin beta chain (946 aa).

Disordered stretches follow at residues 115–142 and 174–194; these read VADR…SSTS and KSRN…RRRR. Over residues 128 to 142 the composition is skewed to low complexity; that stretch reads VSVPTTPNETPSSTS. Residues Asn-208, Asn-217, Asn-271, and Asn-389 are each glycosylated (N-linked (GlcNAc...) asparagine). Residues 436–462 are disordered; the sequence is SPGSHLFNGRGGRTDQRSERDPSHHKY. The segment covering 447–459 has biased composition (basic and acidic residues); it reads GRTDQRSERDPSH. Residues Asn-471, Asn-484, Asn-542, Asn-561, Asn-566, Asn-732, and Asn-804 are each glycosylated (N-linked (GlcNAc...) asparagine). Disulfide bonds link Cys-837/Cys-846, Cys-845/Cys-912, Cys-874/Cys-943, and Cys-878/Cys-945.

It belongs to the TGF-beta family. In terms of assembly, homodimer or heterodimer; disulfide-linked. Cleaved in vitro by metalloproteases tok and tld to produce a 30 kDa product. As to expression, widely expressed in larval brains.

It localises to the secreted. Its function is as follows. Controls several aspects of neuronal morphogenesis; essential for optic lobe development, EcR-B1 expression in larval brains, mushroom body remodeling, dorsal neuron morphogenesis and motoneuron axon guidance. Ligands Actbeta and daw act redundantly through the Activin receptor Babo and its transcriptional mediator Smad2 (Smox), to regulate neuroblast numbers and proliferation rates in the developing larval brain. The chain is Inhibin beta chain (Actbeta) from Drosophila melanogaster (Fruit fly).